We begin with the raw amino-acid sequence, 80 residues long: Conotoxin Cl11.2 (80 aa).

An N-terminal signal peptide occupies residues 1–19 (MKMSVTFLLILMILPLFTG). Residues 20 to 41 (EWQSGSRLSALKKRLLEKRLLQ) constitute a propeptide that is removed on maturation. 4 disulfides stabilise this stretch: Cys-45-Cys-59, Cys-52-Cys-63, Cys-58-Cys-68, and Cys-62-Cys-74.

The protein belongs to the conotoxin I1 superfamily. In terms of tissue distribution, expressed by the venom duct.

The protein localises to the secreted. This Californiconus californicus (California cone) protein is Conotoxin Cl11.2.